A 66-amino-acid chain; its full sequence is Beta-defensin 107A (66 aa).

Positions 1–22 (MKIFFFIFAALILLAQIFQART) are cleaved as a signal peptide. Disulfide bonds link C37-C51 and C41-C60.

This sequence belongs to the beta-defensin family.

The protein resides in the secreted. Its function is as follows. Has antibacterial activity. In Hylobates lar (Lar gibbon), this protein is Beta-defensin 107A (DEFB107A).